A 725-amino-acid chain; its full sequence is Catalase-peroxidase (725 aa).

Composition is skewed to polar residues over residues 1-12 (MSTSNDPSNNAS) and 23-32 (PKQSAGSGTA). The first 20 residues, 1–20 (MSTSNDPSNNASAGKCPFHA), serve as a signal peptide directing secretion. The segment at 1–35 (MSTSNDPSNNASAGKCPFHAETPKQSAGSGTANRD) is disordered. Residues 105–226 (WHGAGTYRTV…IGATEMGLIY (122 aa)) constitute a cross-link (tryptophyl-tyrosyl-methioninium (Trp-Tyr) (with M-252)). The active-site Proton acceptor is the His106. The segment at residues 226–252 (YVNPEGPNASGEPLSAAAAIRATFGNM) is a cross-link (tryptophyl-tyrosyl-methioninium (Tyr-Met) (with W-105)). His267 contacts heme b.

This sequence belongs to the peroxidase family. Peroxidase/catalase subfamily. Homodimer or homotetramer. Requires heme b as cofactor. Post-translationally, formation of the three residue Trp-Tyr-Met cross-link is important for the catalase, but not the peroxidase activity of the enzyme.

It catalyses the reaction H2O2 + AH2 = A + 2 H2O. The catalysed reaction is 2 H2O2 = O2 + 2 H2O. Bifunctional enzyme with both catalase and broad-spectrum peroxidase activity. In Klebsiella pneumoniae subsp. pneumoniae (strain ATCC 700721 / MGH 78578), this protein is Catalase-peroxidase.